Reading from the N-terminus, the 47-residue chain is Delta-ctenitoxin-Pr2d (47 aa).

Cystine bridges form between Cys3–Cys17, Cys10–Cys23, Cys14–Cys46, Cys16–Cys31, and Cys25–Cys29.

Expressed by the venom gland.

The protein localises to the secreted. Its function is as follows. Blocks voltage-gated sodium channels (Nav). Causes rapid general spastic paralysis and death when injected in mice at dose levels of less than 2 ug per mouse. This is Delta-ctenitoxin-Pr2d from Phoneutria reidyi (Brazilian Amazonian armed spider).